The sequence spans 622 residues: Cilia- and flagella-associated protein 206 (622 aa).

Positions 571 to 592 (QVYPPKDTSTQSMREDSTGVPR) are disordered.

It belongs to the CFAP206 family.

The protein localises to the cytoplasm. It localises to the cytoskeleton. Its subcellular location is the cilium axoneme. The protein resides in the cilium basal body. Essential for sperm motility and is involved in the regulation of the beating frequency of motile cilia on the epithelial cells of the respiratory tract. Required for the establishment of radial spokes in sperm flagella. The sequence is that of Cilia- and flagella-associated protein 206 from Macaca fascicularis (Crab-eating macaque).